A 1026-amino-acid polypeptide reads, in one-letter code: Adenylate-forming reductase 06235 (1026 aa).

The interval 37–422 (FEFHAKANPD…LGRIDNQVKI (386 aa)) is adenylation (A) domain. Residues 332–333 (VT) and 412–415 (HLGR) contribute to the AMP site. Residues 556 to 638 (SLVSTVGSTV…ALFIWILVTK (83 aa)) are thiolation and peptide carrier (T) domain. Positions 682-901 (CIRRVCARIY…PPTKMWVKGV (220 aa)) are reductase (R) domain. Residues 685–688 (RVCA), 769–771 (TAL), and Tyr-840 each bind NADP(+).

The protein belongs to the adenylate-forming reductase family.

In terms of biological role, adenylate-forming reductase, a natural product biosynthesis enzyme that resembles non-ribosomal peptide synthetases, yet serves to modify one substrate, rather than to condense two or more building blocks. The A-domain preferentially accepts L-serine, L-alanine and L-valine as substrates. The natural product of the enzyme is not yet known. The protein is Adenylate-forming reductase 06235 of Coprinopsis cinerea (strain Okayama-7 / 130 / ATCC MYA-4618 / FGSC 9003) (Inky cap fungus).